The chain runs to 341 residues: Uroporphyrinogen decarboxylase (341 aa).

Substrate contacts are provided by residues Arg23–Arg27, Phe42, Asp73, Tyr148, Ser203, and His318.

It belongs to the uroporphyrinogen decarboxylase family. As to quaternary structure, homodimer.

The protein localises to the cytoplasm. The catalysed reaction is uroporphyrinogen III + 4 H(+) = coproporphyrinogen III + 4 CO2. Its pathway is porphyrin-containing compound metabolism; protoporphyrin-IX biosynthesis; coproporphyrinogen-III from 5-aminolevulinate: step 4/4. In terms of biological role, catalyzes the decarboxylation of four acetate groups of uroporphyrinogen-III to yield coproporphyrinogen-III. The chain is Uroporphyrinogen decarboxylase from Brucella melitensis biotype 1 (strain ATCC 23456 / CCUG 17765 / NCTC 10094 / 16M).